A 500-amino-acid chain; its full sequence is Aspartyl/glutamyl-tRNA(Asn/Gln) amidotransferase subunit B (500 aa).

It belongs to the GatB/GatE family. GatB subfamily. Heterotrimer of A, B and C subunits.

It carries out the reaction L-glutamyl-tRNA(Gln) + L-glutamine + ATP + H2O = L-glutaminyl-tRNA(Gln) + L-glutamate + ADP + phosphate + H(+). The enzyme catalyses L-aspartyl-tRNA(Asn) + L-glutamine + ATP + H2O = L-asparaginyl-tRNA(Asn) + L-glutamate + ADP + phosphate + 2 H(+). In terms of biological role, allows the formation of correctly charged Asn-tRNA(Asn) or Gln-tRNA(Gln) through the transamidation of misacylated Asp-tRNA(Asn) or Glu-tRNA(Gln) in organisms which lack either or both of asparaginyl-tRNA or glutaminyl-tRNA synthetases. The reaction takes place in the presence of glutamine and ATP through an activated phospho-Asp-tRNA(Asn) or phospho-Glu-tRNA(Gln). The protein is Aspartyl/glutamyl-tRNA(Asn/Gln) amidotransferase subunit B of Brucella anthropi (strain ATCC 49188 / DSM 6882 / CCUG 24695 / JCM 21032 / LMG 3331 / NBRC 15819 / NCTC 12168 / Alc 37) (Ochrobactrum anthropi).